Reading from the N-terminus, the 299-residue chain is Recombination-associated protein RdgC (299 aa).

The protein belongs to the RdgC family.

The protein localises to the cytoplasm. Its subcellular location is the nucleoid. May be involved in recombination. This chain is Recombination-associated protein RdgC, found in Neisseria meningitidis serogroup C (strain 053442).